Reading from the N-terminus, the 122-residue chain is Large ribosomal subunit protein uL14 (122 aa).

Belongs to the universal ribosomal protein uL14 family. In terms of assembly, part of the 50S ribosomal subunit. Forms a cluster with proteins L3 and L19. In the 70S ribosome, L14 and L19 interact and together make contacts with the 16S rRNA in bridges B5 and B8.

Binds to 23S rRNA. Forms part of two intersubunit bridges in the 70S ribosome. The sequence is that of Large ribosomal subunit protein uL14 from Spiroplasma citri.